Reading from the N-terminus, the 208-residue chain is Probable GTP-binding protein EngB (208 aa).

One can recognise an EngB-type G domain in the interval 23-205 (LTSEMVVLGR…RQTLLKHLLT (183 aa)). GTP-binding positions include 31 to 38 (GRSNVGKS), 57 to 61 (GKTRL), 84 to 87 (DLPG), 154 to 157 (TKFD), and 182 to 184 (FNA). Residues S38 and T59 each coordinate Mg(2+).

This sequence belongs to the TRAFAC class TrmE-Era-EngA-EngB-Septin-like GTPase superfamily. EngB GTPase family. Requires Mg(2+) as cofactor.

Functionally, necessary for normal cell division and for the maintenance of normal septation. The protein is Probable GTP-binding protein EngB of Helicobacter pylori (strain ATCC 700392 / 26695) (Campylobacter pylori).